Reading from the N-terminus, the 445-residue chain is E3 ubiquitin-protein ligase MYLIP (445 aa).

The FERM domain maps to 1–279 (MLCYVTRPDA…ETHAFYRCDT (279 aa)). The Fe cation site is built by cysteine 360, cysteine 363, and cysteine 368. The segment at 387 to 422 (CMVCCEEEINSTFCPCGHTVCCESCAAQLQSCPVCR) adopts an RING-type zinc-finger fold. The critical for homodimerization stretch occupies residues 431–433 (VYL).

Homodimer. Interacts with the E2 ubiquitin-conjugating enzyme, UBE2D1 (via RING-type zinc finger). Interacts with myosin regulatory light chain (MRLC) and TMEM4. Autoubiquitinated. In terms of tissue distribution, ubiquitously expressed.

The protein localises to the cytoplasm. The protein resides in the cell membrane. The enzyme catalyses S-ubiquitinyl-[E2 ubiquitin-conjugating enzyme]-L-cysteine + [acceptor protein]-L-lysine = [E2 ubiquitin-conjugating enzyme]-L-cysteine + N(6)-ubiquitinyl-[acceptor protein]-L-lysine.. It participates in protein modification; protein ubiquitination. Its activity is regulated as follows. Can bind 1 iron ion per dimer. Iron binding seems to decrease LDLR degradation activity. Functionally, E3 ubiquitin-protein ligase that mediates ubiquitination and subsequent proteasomal degradation of myosin regulatory light chain (MRLC), LDLR, VLDLR and LRP8. Activity depends on E2 enzymes of the UBE2D family. Proteasomal degradation of MRLC leads to inhibit neurite outgrowth in presence of NGF by counteracting the stabilization of MRLC by saposin-like protein (CNPY2/MSAP) and reducing CNPY2-stimulated neurite outgrowth. Acts as a sterol-dependent inhibitor of cellular cholesterol uptake by mediating ubiquitination and subsequent degradation of LDLR. This chain is E3 ubiquitin-protein ligase MYLIP (MYLIP), found in Homo sapiens (Human).